A 189-amino-acid polypeptide reads, in one-letter code: Peptidyl-tRNA hydrolase (189 aa).

Tyrosine 14 contributes to the tRNA binding site. Histidine 19 (proton acceptor) is an active-site residue. TRNA is bound by residues tyrosine 64, asparagine 66, and asparagine 112.

Belongs to the PTH family. In terms of assembly, monomer.

The protein localises to the cytoplasm. The enzyme catalyses an N-acyl-L-alpha-aminoacyl-tRNA + H2O = an N-acyl-L-amino acid + a tRNA + H(+). In terms of biological role, hydrolyzes ribosome-free peptidyl-tRNAs (with 1 or more amino acids incorporated), which drop off the ribosome during protein synthesis, or as a result of ribosome stalling. Catalyzes the release of premature peptidyl moieties from peptidyl-tRNA molecules trapped in stalled 50S ribosomal subunits, and thus maintains levels of free tRNAs and 50S ribosomes. This is Peptidyl-tRNA hydrolase from Clostridium botulinum (strain Okra / Type B1).